A 221-amino-acid chain; its full sequence is ATP-dependent dethiobiotin synthetase BioD (221 aa).

11–16 (GVGKTY) serves as a coordination point for ATP. Thr-15 provides a ligand contact to Mg(2+). The active site involves Lys-36. Thr-40 serves as a coordination point for substrate. Residues Asp-48 and 107–110 (EGAG) each bind ATP. Asp-48 and Glu-107 together coordinate Mg(2+).

It belongs to the dethiobiotin synthetase family. Homodimer. Mg(2+) is required as a cofactor.

It is found in the cytoplasm. It catalyses the reaction (7R,8S)-7,8-diammoniononanoate + CO2 + ATP = (4R,5S)-dethiobiotin + ADP + phosphate + 3 H(+). Its pathway is cofactor biosynthesis; biotin biosynthesis; biotin from 7,8-diaminononanoate: step 1/2. Its function is as follows. Catalyzes a mechanistically unusual reaction, the ATP-dependent insertion of CO2 between the N7 and N8 nitrogen atoms of 7,8-diaminopelargonic acid (DAPA, also called 7,8-diammoniononanoate) to form a ureido ring. The sequence is that of ATP-dependent dethiobiotin synthetase BioD from Hydrogenobaculum sp. (strain Y04AAS1).